Reading from the N-terminus, the 293-residue chain is Protease HtpX (293 aa).

2 consecutive transmembrane segments (helical) span residues 4–24 (ISLF…VLSL) and 33–53 (AGLM…SLLM). His-139 lines the Zn(2+) pocket. The active site involves Glu-140. Position 143 (His-143) interacts with Zn(2+). The next 2 membrane-spanning stretches (helical) occupy residues 158–178 (VVNT…AGFM) and 193–213 (LVYF…ASII). Glu-222 serves as a coordination point for Zn(2+).

The protein belongs to the peptidase M48B family. Requires Zn(2+) as cofactor.

It localises to the cell inner membrane. The chain is Protease HtpX from Sodalis glossinidius (strain morsitans).